The primary structure comprises 291 residues: Phosphate import ATP-binding protein PstB (291 aa).

Residues 45–286 form the ABC transporter domain; that stretch reads YSTQNLDLWY…PADKQTEDYI (242 aa). Residue 77–84 participates in ATP binding; that stretch reads GPSGCGKS.

It belongs to the ABC transporter superfamily. Phosphate importer (TC 3.A.1.7) family. In terms of assembly, the complex is composed of two ATP-binding proteins (PstB), two transmembrane proteins (PstC and PstA) and a solute-binding protein (PstS).

It is found in the cell membrane. The catalysed reaction is phosphate(out) + ATP + H2O = ADP + 2 phosphate(in) + H(+). In terms of biological role, part of the ABC transporter complex PstSACB involved in phosphate import. Responsible for energy coupling to the transport system. This chain is Phosphate import ATP-binding protein PstB, found in Staphylococcus epidermidis (strain ATCC 35984 / DSM 28319 / BCRC 17069 / CCUG 31568 / BM 3577 / RP62A).